Here is a 1019-residue protein sequence, read N- to C-terminus: Vacuolar membrane protease (1019 aa).

Residues 1-69 (MFLEINFYST…DRIPTVVGFR (69 aa)) are Cytoplasmic-facing. Residues 70 to 90 (VIPTTVLVLLTYLTIFTLVIV) traverse the membrane as a helical segment. The Vacuolar portion of the chain corresponds to 91 to 404 (TDWLPEPPKN…AELVIFYLND (314 aa)). N-linked (GlcNAc...) asparagine glycosylation occurs at asparagine 158. Residues histidine 195 and aspartate 207 each contribute to the Zn(2+) site. Glutamate 239 functions as the Proton acceptor in the catalytic mechanism. A Zn(2+)-binding site is contributed by glutamate 240. Residue asparagine 256 is glycosylated (N-linked (GlcNAc...) asparagine). The Zn(2+) site is built by glutamate 265 and histidine 341. Residues 405–425 (LLIYNVVSLVVGPISLIFFVV) traverse the membrane as a helical segment. The Cytoplasmic segment spans residues 426–466 (CEYVLRNERARQPNGHPVSRPSVLEWLKQRSWLRALWRRSK). The chain crosses the membrane as a helical span at residues 467 to 487 (FWIALVITIALQALLVWGYLA). Residues 488–497 (FNSFTVYSSP) are Vacuolar-facing. A helical membrane pass occupies residues 498-518 (YLVLISFFSLAYLSLVIPLTF). Topologically, residues 519-539 (TFNQTQSPTAKYIAPEREKHT) are cytoplasmic. Residues 540–560 (LLIQVYIFTWILLLFSTIAVA) form a helical membrane-spanning segment. Over 561–565 (RAQVG) the chain is Vacuolar. Residues 566-586 (GLYFVTAWNTGVWIACLLAAV) form a helical membrane-spanning segment. The Cytoplasmic portion of the chain corresponds to 587–651 (EGMMLPVPQG…ASLRKPQEGG (65 aa)). The segment at 603 to 634 (HSAHHHHHHEHEEDQDADDDDREQRQPPTEAT) is disordered. Residues 652 to 672 (VVGWWIVHLLLTIPAPVLLIA) traverse the membrane as a helical segment. Residues 673 to 692 (QMGSLLLDSLPQTLADGSPA) lie on the Vacuolar side of the membrane. Residues 693–713 (YVVYAAASLTAVLLAVPLTPF) form a helical membrane-spanning segment. Over 714-719 (SGKLHR) the chain is Cytoplasmic. The helical transmembrane segment at 720–740 (GLFFLFFLSFLIVTAYLWLAF) threads the bilayer. The Vacuolar portion of the chain corresponds to 741–1019 (PFSSADPLKV…LVEAWSPFSV (279 aa)). N-linked (GlcNAc...) asparagine glycosylation occurs at asparagine 774.

This sequence belongs to the peptidase M28 family. Zn(2+) is required as a cofactor.

It is found in the vacuole membrane. Functionally, may be involved in vacuolar sorting and osmoregulation. This Laccaria bicolor (strain S238N-H82 / ATCC MYA-4686) (Bicoloured deceiver) protein is Vacuolar membrane protease.